Here is a 537-residue protein sequence, read N- to C-terminus: Apoptosis inhibitor 5-like protein API5 (537 aa).

Positions 9-363 (AEVERLYELG…TTNSLCGYKI (355 aa)) are ARM-like and Heat-like helical repeats. The tract at residues 465–537 (WMEQPKKPAP…GGRGRGWGYR (73 aa)) is disordered. The span at 474–492 (PTTTGGKRSQPATNGNTPA) shows a compositional bias: polar residues.

The protein belongs to the API5 family. As to quaternary structure, interacts with AIP1 and AIP2.

The protein resides in the nucleus. Functionally, putative anti-apoptotic factor involved in the regulation of tapetal programmed cell death (PCD) and degeneration during anther development. Interacts directly with the DEAD-box ATP-dependent RNA helicases AIP1 and AIP2 that form dimers and bind the promoter region of the cysteine protease CP1 involved in tapetum PCD. In Oryza sativa subsp. japonica (Rice), this protein is Apoptosis inhibitor 5-like protein API5.